We begin with the raw amino-acid sequence, 562 residues long: Arf-GAP domain and FG repeat-containing protein 1 (562 aa).

The Arf-GAP domain maps to 11 to 135 (EKHLKMLRDM…WYVPPEQAKV (125 aa)). A C4-type zinc finger spans residues 29 to 52 (CFDCDQRGPTYVNMTVGSFVCTSC). The interval 145–193 (GSSASSTSSTPEVKPLKSLLGDSAPTLHLNKGTPSQSPVVGRSQGQQQE) is disordered. Phosphoserine is present on Ser-167. The span at 176 to 191 (GTPSQSPVVGRSQGQQ) shows a compositional bias: polar residues. Thr-177 carries the phosphothreonine modification. Phosphoserine occurs at positions 181 and 362. An O-linked (GlcNAc) serine glycan is attached at Ser-367.

Interacts with EPS15R and EPS15. Interacts with FCHO1. In terms of processing, O-glycosylated. Ubiquitously expressed.

The protein resides in the nucleus. It is found in the cytoplasmic vesicle. In terms of biological role, required for vesicle docking or fusion during acrosome biogenesis. May play a role in RNA trafficking or localization. In case of infection by HIV-1, acts as a cofactor for viral Rev and promotes movement of Rev-responsive element-containing RNAs from the nuclear periphery to the cytoplasm. This step is essential for HIV-1 replication. This chain is Arf-GAP domain and FG repeat-containing protein 1 (AGFG1), found in Homo sapiens (Human).